The chain runs to 178 residues: High mobility group B protein 1 (178 aa).

Composition is skewed to basic and acidic residues over residues 1–52 and 101–118; these read MKTA…DPNK and APYE…EKQM. Disordered stretches follow at residues 1 to 59 and 75 to 178; these read MKTA…APSA and NPNV…EEED. The segment at residues 53–122 is a DNA-binding region (HMG box); sequence PKRAPSAFFV…EYEKQMDAYN (70 aa). 2 positions are modified to phosphoserine: Ser137 and Ser146. Residues 140–178 are compositionally biased toward acidic residues; sequence NDEDEASGEEELLEKEAAGDDEEEEEEEDDDDDDDEEED.

The protein belongs to the HMGB family. As to expression, expressed in cotyledons, roots, stems, leaves and flowers (excluding pedicels).

Its subcellular location is the nucleus. Binds preferentially double-stranded DNA. Modulates general plant growth and stress tolerance. Confers sensitivity to salt and genotoxic (methyl methanesulfonate, MMS) stresses. The polypeptide is High mobility group B protein 1 (HMGB1) (Arabidopsis thaliana (Mouse-ear cress)).